A 543-amino-acid polypeptide reads, in one-letter code: Protein SGE1 (543 aa).

Topologically, residues 1-8 (MKSTLSLT) are cytoplasmic. A helical membrane pass occupies residues 9-29 (LCVISLLLTLFLAALDIVIVV). The Extracellular portion of the chain corresponds to 30–41 (TLYDTIGIKFHD). The helical transmembrane segment at 42–62 (FGNIGWLVTGYALSNAVFMLL) threads the bilayer. The Cytoplasmic segment spans residues 63–79 (WGRLAEILGTKECLMIS). Residues 80 to 100 (VIVFEIGSLISALSNSMATLI) form a helical membrane-spanning segment. The Extracellular portion of the chain corresponds to 101-103 (SGR). The chain crosses the membrane as a helical span at residues 104–124 (VVAGFGGSGIESLAFVVGTSI). Over 125–131 (VRENHRG) the chain is Cytoplasmic. A helical membrane pass occupies residues 132–152 (IMITALAISYVIAEGVGPFIG). The Extracellular portion of the chain corresponds to 153-162 (GAFNEHLSWR). A helical membrane pass occupies residues 163 to 183 (WCFYINLPIGAFAFIILAFCN). Residues 184–227 (TSGEPHQKMWLPSKIKKIMNYDYGELLKASFWKNTFEVLVFKLD) lie on the Cytoplasmic side of the membrane. The helical transmembrane segment at 228–248 (MVGIILSSAGFTLLMLGLSFG) threads the bilayer. Residues 249–255 (GNNFPWN) lie on the Extracellular side of the membrane. Residues 256 to 276 (SGIIICFFTVGPILLLLFCAY) traverse the membrane as a helical segment. Residues 277 to 300 (DFHFLSLSGLHYDNKRIKPLLTWN) are Cytoplasmic-facing. A helical membrane pass occupies residues 301–321 (IASNCGIFTSSITGFLSCFAY). The Extracellular portion of the chain corresponds to 322-341 (ELQSAYLVQLYQLVFKKKPT). The helical transmembrane segment at 342-362 (LASIHLWELSIPAMIATMAIA) threads the bilayer. Over 363-373 (YLNSKYGIIKP) the chain is Cytoplasmic. Residues 374–394 (AIVFGVLCGIVGSGLFTLING) traverse the membrane as a helical segment. Over 395–399 (ELSQS) the chain is Extracellular. Residues 400–420 (IGYSILPGIAFGSIFQATLLS) traverse the membrane as a helical segment. At 421–443 (SQVQITSDDPDFQNKFIEVTAFN) the chain is on the cytoplasmic side. A helical membrane pass occupies residues 444 to 464 (SFAKSLGFAFGGNMGAMIFTA). Topologically, residues 465-508 (SLKNQMRSSQLNIPQFTSVETLLAYSTEHYDGPQSSLSKFINTA) are extracellular. A helical membrane pass occupies residues 509 to 529 (IHDVFYCALGCYALSFFFGIF). Topologically, residues 530 to 543 (TSSKKTTISAKKQQ) are cytoplasmic.

It belongs to the major facilitator superfamily.

Its subcellular location is the membrane. Its function is as follows. Drug export permease. Multi-copy suppressor of loss-of-function mutation of GAL11. Involved specifically in transcription of GAL4-dependent genes. Can link GAL4 with the basal transcription machinery if GAL11 is missing. Confers resistance to 10-N-nonyl acridine orange (NAO) and in general to cationic dyes. This Saccharomyces cerevisiae (strain ATCC 204508 / S288c) (Baker's yeast) protein is Protein SGE1 (SGE1).